The sequence spans 123 residues: MAGGLKKAMVYLGLAEDNQELHSAPSGMSHLRRVPHPKQQMSEIFTFHPKKYSEVSGIVERFRQNIPVIIDMSQLSDTDARRMIDFASGLSQGLVGKIERVVGKVFLLSPEHISISTESKKEE.

This sequence belongs to the SepF family. As to quaternary structure, homodimer. Interacts with FtsZ.

Its subcellular location is the cytoplasm. Cell division protein that is part of the divisome complex and is recruited early to the Z-ring. Probably stimulates Z-ring formation, perhaps through the cross-linking of FtsZ protofilaments. Its function overlaps with FtsA. This chain is Cell division protein SepF, found in Tropheryma whipplei (strain TW08/27) (Whipple's bacillus).